A 926-amino-acid chain; its full sequence is LPS-assembly protein LptD (926 aa).

The N-terminal stretch at 1 to 22 is a signal peptide; the sequence is MALKSPAFRKKFPLLVTGSLLA. Residues 58–99 are disordered; the sequence is VDLPPRPVHDTTSVSSNGTVTSQSTSSGEQVAGTQLVTEAKG. Low complexity predominate over residues 68–85; the sequence is TTSVSSNGTVTSQSTSSG.

The protein belongs to the LptD family. Component of the lipopolysaccharide transport and assembly complex. Interacts with LptE and LptA.

It is found in the cell outer membrane. Together with LptE, is involved in the assembly of lipopolysaccharide (LPS) at the surface of the outer membrane. The polypeptide is LPS-assembly protein LptD (Pseudomonas savastanoi pv. phaseolicola (strain 1448A / Race 6) (Pseudomonas syringae pv. phaseolicola (strain 1448A / Race 6))).